A 714-amino-acid polypeptide reads, in one-letter code: Solute carrier family 12 member 8 (714 aa).

A run of 6 helical transmembrane segments spans residues Val37 to Leu60, Leu72 to Ile93, Ser99 to Gly116, Gly123 to Ala142, Ile154 to Leu173, and Leu185 to Leu205. N-linked (GlcNAc...) asparagine glycosylation is present at Asn221. 5 helical membrane-spanning segments follow: residues Phe233 to Gly254, Leu266 to Ile289, Gly309 to Ala331, Pro360 to Val377, and Leu383 to Phe403. Disordered regions lie at residues Lys471–Asp503 and Gly530–Thr550. Positions Ser533–Glu548 are enriched in polar residues. Transmembrane regions (helical) follow at residues Cys593–Tyr616 and Gly622–Ala643.

This sequence belongs to the SLC12A transporter family. Ubiquitous with very low level in normal skin.

It is found in the membrane. Functionally, cation/chloride cotransporter that may play a role in the control of keratinocyte proliferation. The protein is Solute carrier family 12 member 8 (SLC12A8) of Homo sapiens (Human).